A 538-amino-acid chain; its full sequence is Transmembrane protein 266 (538 aa).

The Cytoplasmic portion of the chain corresponds to 1–102 (MALVTSFNMA…VFLLSASLNS (102 aa)). The helical transmembrane segment at 103–123 (FLVACVILVVILLTLELLIDT) threads the bilayer. Topologically, residues 124 to 130 (KLLQFSN) are extracellular. A helical membrane pass occupies residues 131 to 151 (AFQFAGVIHWISLVILSVFFS). The Cytoplasmic segment spans residues 152 to 169 (ETVLRIVVLGIWDYIENK). The helical transmembrane segment at 170-190 (IEVFDGAVIILSLAPMVASTV) threads the bilayer. At 191–199 (ANGPRSPWD) the chain is on the extracellular side. The helical transmembrane segment at 200–220 (AISLIIMFRIWRVKRVIDAYV) threads the bilayer. The Cytoplasmic segment spans residues 221–538 (LPVKLEMEMV…EPKLHTVPEA (318 aa)). Residues 232–278 (QQYEKAKAIQDEQLERLTQICQEQGFEIRQLRAHLAQQDLDLAAERE) adopt a coiled-coil conformation. 2 disordered regions span residues 380–435 (NSTC…PLPL) and 453–483 (SSLS…VQTS). The segment covering 381–396 (STCASATSETTSHSTC) has biased composition (low complexity). Polar residues predominate over residues 397 to 417 (GSVTRAQSASSQTLGSSTDCS). A compositionally biased stretch (low complexity) spans 425–434 (PSKPRSSPLP).

Homodimer; disulfide-linked. In terms of tissue distribution, in brain, present in the granule layer of the cerebellar cortex. Localizes on the post-synaptic side of glutamatergic mossy fibers and granule cells in the cerebellum (at protein level). Predominantly expressed in granule cells in cerebellum (at protein level).

The protein resides in the cell projection. It is found in the dendrite. The protein localises to the perikaryon. Its subcellular location is the cell membrane. In terms of biological role, voltage-sensor protein present on the post-synaptic side of glutamatergic mossy fibers and granule cells in the cerebellum. Despite the presence of a voltage-sensor segment, does not form a functional ion channel and its precise role remains unclear. Undergoes both rapid and slow structural rearrangements in response to changes in voltage. Contains a zinc-binding site that can regulate the slow conformational transition. The polypeptide is Transmembrane protein 266 (Mus musculus (Mouse)).